The chain runs to 428 residues: MKQDSQSENESIVCDLSVSEDQRNVKFFSDLQTPIPKHLPFFMDVTLRDGNQALRRPWNLEQKETIFKQLLKLGVQGIEVGFASSNNQEFEACKYLSSIAPDNVVISSLSRAVEKEIEVSWKAIRFAPKPRIHIVYPVSAFTIQNVLKISPEKVLDRISQSVAYAKSLVGSKGEVQFSGEHFGDSLENLDFAAEAFQIALNNGADVVNLPNTVERYRPWLFVSMVKAVANLLPEDTRISIHTHNDLGMATATTVESYFAGAVQLETALNGLGERAGNTNTYEVAIALHNCGVEVPLNFSTIYETSRLVSYLSEIPIYEKAPLIGEDVISHRSGIHQDGVAKTRHLQKGAYRAFDAALIGRPEGDRIEFTNQSGKSAVYCILKDAGENITLEEAGRLQPILKKISEDLGRRELTLEEIRIEWNRLLRAI.

The 263-residue stretch at 40–302 folds into the Pyruvate carboxyltransferase domain; it reads PFFMDVTLRD…EVPLNFSTIY (263 aa). Residues Asp49, His241, His243, and Asn277 each contribute to the Mn(2+) site.

Belongs to the alpha-IPM synthase/homocitrate synthase family. LeuA type 1 subfamily. Homodimer. Mn(2+) is required as a cofactor.

It localises to the cytoplasm. It carries out the reaction 3-methyl-2-oxobutanoate + acetyl-CoA + H2O = (2S)-2-isopropylmalate + CoA + H(+). It participates in amino-acid biosynthesis; L-leucine biosynthesis; L-leucine from 3-methyl-2-oxobutanoate: step 1/4. Its function is as follows. Catalyzes the condensation of the acetyl group of acetyl-CoA with 3-methyl-2-oxobutanoate (2-ketoisovalerate) to form 3-carboxy-3-hydroxy-4-methylpentanoate (2-isopropylmalate). Has high alpha-isopropylmalate synthase activity and low citramalate synthase activity. This Leptospira interrogans serogroup Icterohaemorrhagiae serovar Lai (strain 56601) protein is 2-isopropylmalate synthase 2.